Reading from the N-terminus, the 58-residue chain is T-cell receptor gamma alternate reading frame protein (58 aa).

Detected at low levels in the ductal cells of the salivary gland but not in the acinar cells (at protein level). Expressed in endometrium (at protein level). Expressed in epithelial cells within the acinar ducts of the prostate.

This Homo sapiens (Human) protein is T-cell receptor gamma alternate reading frame protein.